The sequence spans 142 residues: Heat shock protein HSP.16.4 (142 aa).

A sHSP domain is found at 27 to 142; it reads NLFNDLKSNL…KEIKTSIPIE (116 aa).

It belongs to the small heat shock protein (HSP20) family.

The protein resides in the cytoplasm. In Streptococcus thermophilus, this protein is Heat shock protein HSP.16.4.